The sequence spans 496 residues: Probable cytosol aminopeptidase (496 aa).

The Mn(2+) site is built by lysine 266 and aspartate 271. Lysine 278 is an active-site residue. Mn(2+)-binding residues include aspartate 289, aspartate 348, and glutamate 350. The active site involves arginine 352.

It belongs to the peptidase M17 family. Mn(2+) serves as cofactor.

It localises to the cytoplasm. It catalyses the reaction Release of an N-terminal amino acid, Xaa-|-Yaa-, in which Xaa is preferably Leu, but may be other amino acids including Pro although not Arg or Lys, and Yaa may be Pro. Amino acid amides and methyl esters are also readily hydrolyzed, but rates on arylamides are exceedingly low.. The enzyme catalyses Release of an N-terminal amino acid, preferentially leucine, but not glutamic or aspartic acids.. Functionally, presumably involved in the processing and regular turnover of intracellular proteins. Catalyzes the removal of unsubstituted N-terminal amino acids from various peptides. The sequence is that of Probable cytosol aminopeptidase from Azotobacter vinelandii (strain DJ / ATCC BAA-1303).